A 232-amino-acid chain; its full sequence is Orotidine 5'-phosphate decarboxylase (232 aa).

Residues Asp-13, Lys-35, 62–71 (DLKFHDIPNT), Thr-122, Arg-182, Gln-191, Gly-211, and Arg-212 contribute to the substrate site. Lys-64 serves as the catalytic Proton donor.

This sequence belongs to the OMP decarboxylase family. Type 1 subfamily. As to quaternary structure, homodimer.

It carries out the reaction orotidine 5'-phosphate + H(+) = UMP + CO2. It participates in pyrimidine metabolism; UMP biosynthesis via de novo pathway; UMP from orotate: step 2/2. In terms of biological role, catalyzes the decarboxylation of orotidine 5'-monophosphate (OMP) to uridine 5'-monophosphate (UMP). The protein is Orotidine 5'-phosphate decarboxylase of Pseudomonas fluorescens (strain Pf0-1).